A 192-amino-acid polypeptide reads, in one-letter code: Adenylate kinase (192 aa).

10 to 15 contributes to the ATP binding site; the sequence is GAGKGT. The tract at residues 30–56 is NMP; it reads GTGGMLRALEPESGEQIHLRIDRGHFA. AMP-binding positions include T31, R36, 82 to 85, and Q89; that span reads GFPR. Residues 123 to 133 form an LID region; that stretch reads KRGETENRADD. Position 124 (R124) interacts with ATP. 2 residues coordinate AMP: R130 and R141. D169 provides a ligand contact to ATP.

The protein belongs to the adenylate kinase family. In terms of assembly, monomer.

It localises to the cytoplasm. It catalyses the reaction AMP + ATP = 2 ADP. The protein operates within purine metabolism; AMP biosynthesis via salvage pathway; AMP from ADP: step 1/1. Functionally, catalyzes the reversible transfer of the terminal phosphate group between ATP and AMP. Plays an important role in cellular energy homeostasis and in adenine nucleotide metabolism. This chain is Adenylate kinase, found in Rhodopirellula baltica (strain DSM 10527 / NCIMB 13988 / SH1).